We begin with the raw amino-acid sequence, 355 residues long: Guanine nucleotide-binding protein G(i) subunit alpha-2 (355 aa).

Glycine 2 carries N-myristoyl glycine lipidation. The S-palmitoyl cysteine moiety is linked to residue cysteine 3. The region spanning 32–355 (REVKLLLLGA…KNNLKDCGLF (324 aa)) is the G-alpha domain. A G1 motif region spans residues 35 to 48 (KLLLLGAGESGKST). GTP-binding positions include 40–47 (GAGESGKS), 176–182 (LRTRVKT), 201–205 (DVGGQ), 270–273 (NKKD), and alanine 327. Mg(2+)-binding residues include serine 47 and threonine 182. Residues 174–182 (DVLRTRVKT) are G2 motif. Residues 197–206 (FKMFDVGGQR) form a G3 motif region. The segment at 266–273 (ILFLNKKD) is G4 motif. The G5 motif stretch occupies residues 325–330 (TCATDT).

The protein belongs to the G-alpha family. G(i/o/t/z) subfamily. As to quaternary structure, g proteins are composed of 3 units; alpha, beta and gamma. The alpha chain contains the guanine nucleotide binding site. In this context, interacts with GNB2. Interacts with UNC5B. Interacts with GPSM1. Interacts with RGS12 and RGS14. Interacts (inactive GDP-bound form) with NUCB1 (via GBA motif); the interaction leads to activation of GNAI3. Interacts (inactive GDP-bound form) with CCDC88C/DAPLE (via GBA motif). Interacts (inactive GDP-bound form) with CCDC8A/GIV (via GBA motif). Interacts with CXCR1 and CXCR2.

Its subcellular location is the cytoplasm. The protein localises to the cytoskeleton. The protein resides in the microtubule organizing center. It localises to the centrosome. It is found in the cell membrane. Its subcellular location is the membrane. Guanine nucleotide-binding proteins (G proteins) are involved as modulators or transducers in various transmembrane signaling systems. The G(i) proteins are involved in hormonal regulation of adenylate cyclase: they inhibit the cyclase in response to beta-adrenergic stimuli. May play a role in cell division. The chain is Guanine nucleotide-binding protein G(i) subunit alpha-2 (GNAI2) from Canis lupus familiaris (Dog).